A 485-amino-acid polypeptide reads, in one-letter code: Cysteine--tRNA ligase (485 aa).

A Zn(2+)-binding site is contributed by cysteine 29. Positions 31–41 (VTVYDHCHIGH) match the 'HIGH' region motif. Residues cysteine 209, histidine 234, and glutamate 238 each contribute to the Zn(2+) site. The short motif at 266–270 (KMSKS) is the 'KMSKS' region element. Residue lysine 269 participates in ATP binding.

This sequence belongs to the class-I aminoacyl-tRNA synthetase family. Monomer. Requires Zn(2+) as cofactor.

Its subcellular location is the cytoplasm. It carries out the reaction tRNA(Cys) + L-cysteine + ATP = L-cysteinyl-tRNA(Cys) + AMP + diphosphate. This is Cysteine--tRNA ligase from Geobacter metallireducens (strain ATCC 53774 / DSM 7210 / GS-15).